A 141-amino-acid polypeptide reads, in one-letter code: Small ribosomal subunit protein uS8c (141 aa).

This sequence belongs to the universal ribosomal protein uS8 family. As to quaternary structure, part of the 30S ribosomal subunit.

The protein resides in the plastid. It localises to the chloroplast. In terms of biological role, one of the primary rRNA binding proteins, it binds directly to 16S rRNA central domain where it helps coordinate assembly of the platform of the 30S subunit. This is Small ribosomal subunit protein uS8c (rps8) from Chlamydomonas reinhardtii (Chlamydomonas smithii).